Consider the following 328-residue polypeptide: Stress response kinase A (328 aa).

D201 (proton acceptor) is an active-site residue. Residues N206 and D217 each contribute to the Mg(2+) site. The active site involves D217.

This sequence belongs to the SrkA/RdoA protein kinase family. As to quaternary structure, monomer. Requires Mg(2+) as cofactor.

It localises to the cytoplasm. The catalysed reaction is L-seryl-[protein] + ATP = O-phospho-L-seryl-[protein] + ADP + H(+). The enzyme catalyses L-threonyl-[protein] + ATP = O-phospho-L-threonyl-[protein] + ADP + H(+). Its function is as follows. A protein kinase that phosphorylates Ser and Thr residues. Probably acts to suppress the effects of stress linked to accumulation of reactive oxygen species. Probably involved in the extracytoplasmic stress response. Also has a role in LPS synthesis, through regulation of the galETK expression. A protein kinase that phosphorylates Ser and Thr residues. Probably acts to suppress the effects of stress linked to accumulation of reactive oxygen species. Probably involved in the extracytoplasmic stress response. This chain is Stress response kinase A, found in Shigella flexneri.